A 245-amino-acid chain; its full sequence is 1-(5-phosphoribosyl)-5-[(5-phosphoribosylamino)methylideneamino] imidazole-4-carboxamide isomerase (245 aa).

Aspartate 7 acts as the Proton acceptor in catalysis. The active-site Proton donor is the aspartate 129.

This sequence belongs to the HisA/HisF family.

The protein resides in the cytoplasm. It carries out the reaction 1-(5-phospho-beta-D-ribosyl)-5-[(5-phospho-beta-D-ribosylamino)methylideneamino]imidazole-4-carboxamide = 5-[(5-phospho-1-deoxy-D-ribulos-1-ylimino)methylamino]-1-(5-phospho-beta-D-ribosyl)imidazole-4-carboxamide. The protein operates within amino-acid biosynthesis; L-histidine biosynthesis; L-histidine from 5-phospho-alpha-D-ribose 1-diphosphate: step 4/9. This is 1-(5-phosphoribosyl)-5-[(5-phosphoribosylamino)methylideneamino] imidazole-4-carboxamide isomerase from Shigella boydii serotype 4 (strain Sb227).